The following is a 365-amino-acid chain: Popy Class I histocompatibility antigen, A-1 alpha chain (365 aa).

A signal peptide spans 1–24 (MAIMAPRTLLLLLSGALALTQTWA). The segment at 25–114 (GSHSMRYFST…LRGYYNQSDG (90 aa)) is alpha-1. The Extracellular portion of the chain corresponds to 25–308 (GSHSMRYFST…ELSSQPTIPI (284 aa)). Residue Asn110 is glycosylated (N-linked (GlcNAc...) asparagine). Residues 115 to 206 (GSHTIQRMFG…ENGKETLQRT (92 aa)) form an alpha-2 region. 2 cysteine pairs are disulfide-bonded: Cys125/Cys188 and Cys227/Cys283. The tract at residues 207–298 (DAPKTHMTHH…GLPEPLTLRW (92 aa)) is alpha-3. The 89-residue stretch at 209–297 (PKTHMTHHPV…EGLPEPLTLR (89 aa)) folds into the Ig-like C1-type domain. Residues 299-308 (ELSSQPTIPI) form a connecting peptide region. A helical transmembrane segment spans residues 309–332 (VGIIAGLVLLGAVITGAVVAAVMW). Residues 333–365 (RRRNSDRKGGSYSQAASNDSAQGSDVSLTACKV) lie on the Cytoplasmic side of the membrane. The tract at residues 340–365 (KGGSYSQAASNDSAQGSDVSLTACKV) is disordered. A Phosphoserine modification is found at Ser343. A compositionally biased stretch (polar residues) spans 343 to 359 (SYSQAASNDSAQGSDVS). Tyr344 bears the Phosphotyrosine mark. Phosphoserine is present on residues Ser345, Ser349, Ser352, Ser356, and Ser359.

Belongs to the MHC class I family. As to quaternary structure, heterodimer of an alpha chain and a beta chain (beta-2-microglobulin).

The protein localises to the membrane. Its function is as follows. Involved in the presentation of foreign antigens to the immune system. In Pongo pygmaeus (Bornean orangutan), this protein is Popy Class I histocompatibility antigen, A-1 alpha chain.